A 445-amino-acid polypeptide reads, in one-letter code: N-succinylarginine dihydrolase (445 aa).

Substrate-binding positions include 19 to 28 (AGLSFGNVAS), asparagine 110, and 137 to 138 (HR). Glutamate 174 is a catalytic residue. Arginine 214 contributes to the substrate binding site. Histidine 250 is an active-site residue. Residues aspartate 252 and asparagine 363 each coordinate substrate. Cysteine 369 acts as the Nucleophile in catalysis.

It belongs to the succinylarginine dihydrolase family. Homodimer.

It carries out the reaction N(2)-succinyl-L-arginine + 2 H2O + 2 H(+) = N(2)-succinyl-L-ornithine + 2 NH4(+) + CO2. It participates in amino-acid degradation; L-arginine degradation via AST pathway; L-glutamate and succinate from L-arginine: step 2/5. Catalyzes the hydrolysis of N(2)-succinylarginine into N(2)-succinylornithine, ammonia and CO(2). The polypeptide is N-succinylarginine dihydrolase (Shewanella halifaxensis (strain HAW-EB4)).